A 429-amino-acid chain; its full sequence is uncharacterized protein (429 aa).

Catalysis depends on charge relay system residues Ser116, Asp179, and His206.

The protein belongs to the AB hydrolase 3 family.

It is found in the cytoplasm. The protein localises to the nucleus. This is an uncharacterized protein from Schizosaccharomyces pombe (strain 972 / ATCC 24843) (Fission yeast).